The following is a 556-amino-acid chain: Endonuclease/exonuclease/phosphatase family domain-containing protein 1 (556 aa).

Residues 39-68 (ERLNINTATEEELMTLPGVTRQVAQNIVEY) form the HhH domain.

The polypeptide is Endonuclease/exonuclease/phosphatase family domain-containing protein 1 (eepd1) (Xenopus laevis (African clawed frog)).